The chain runs to 318 residues: MDQDAFILKEDSEVEREAPGGRESLSDVIGFLDAVLSSEPTDIGGDRSWLHNTINTPQGPGSAHRAKSEGEGEVSTPSTQDNRSGEESRVSGRTSKPEAEAHAGNLDKQNIHRAFGGRTGTNSVSQDLGDGGDSGILENPPNERGYPRSGIEDENREMAAHPDKRGEDQAEGLPEEVRGSTSLPDEGEGGASNNGRSMEPGSSHSARVTGVLVIPSPELEEAVLRRNKRRPTNSGSKPLTPATVPGTRSPPLNRYNSTGSPPGKPPSTQDEHINSGDTPAVRVKDRKPPIGTRSVSDCPANGRSIHPGLETDSTKKGA.

Disordered regions lie at residues 1 to 23 (MDQDAFILKEDSEVEREAPGGRE) and 38 to 318 (SEPT…KKGA). Residues 7-20 (ILKEDSEVEREAPG) show a composition bias toward basic and acidic residues. Over residues 50–59 (LHNTINTPQG) the composition is skewed to polar residues. Position 68 is a phosphoserine; by host (S68). Residues 83–101 (RSGEESRVSGRTSKPEAEA) are compositionally biased toward basic and acidic residues. Residue S125 is modified to Phosphoserine; by host. Residues 150-168 (GIEDENREMAAHPDKRGED) show a composition bias toward basic and acidic residues. Over residues 191 to 206 (ASNNGRSMEPGSSHSA) the composition is skewed to polar residues. A phosphoserine; by host mark is found at S192, S249, S257, and S260.

This chain is Protein W (P/V/C), found in Sendai virus (strain Z) (SeV).